We begin with the raw amino-acid sequence, 136 residues long: Histone H3.3-like type 2 (136 aa).

The interval 1–20 (MARTKQTARKSTGGKAPRKA) is disordered. An N6-acetyllysine; alternate mark is found at K5 and K10. K5 and K10 each carry N6-methylated lysine; alternate. Phosphoserine is present on S11. N6-acetyllysine occurs at positions 15 and 24. N6-methylated lysine is present on K28. Phosphoserine is present on S29. N6-methylated lysine occurs at positions 37 and 80.

Belongs to the histone H3 family. As to quaternary structure, the nucleosome is a histone octamer containing two molecules each of H2A, H2B, H3 and H4 assembled in one H3-H4 heterotetramer and two H2A-H2B heterodimers. The octamer wraps approximately 147 bp of DNA. In terms of processing, acetylation is generally linked to gene activation. Methylation at Lys-5 is linked to gene activation. Methylation at Lys-10 is linked to gene repression.

It localises to the nucleus. It is found in the chromosome. Functionally, putative variant histone H3 which may replace conventional H3 in a subset of nucleosomes. Nucleosomes wrap and compact DNA into chromatin, limiting DNA accessibility to the cellular machineries which require DNA as a template. Histones thereby play a central role in transcription regulation, DNA repair, DNA replication and chromosomal stability. DNA accessibility is regulated via a complex set of post-translational modifications of histones, also called histone code, and nucleosome remodeling. The chain is Histone H3.3-like type 2 (his-74) from Caenorhabditis elegans.